A 555-amino-acid polypeptide reads, in one-letter code: Transmembrane protein 87A (555 aa).

The signal sequence occupies residues 1-21; sequence MAAAAWLQVLPVILLLLGAHP. Over 22 to 225 the chain is Lumenal; the sequence is SPLSFFSAGP…YEYLTLEDYP (204 aa). 2 disulfide bridges follow: cysteine 74-cysteine 128 and cysteine 89-cysteine 431. Residues asparagine 79, asparagine 127, asparagine 157, and asparagine 160 are each glycosylated (N-linked (GlcNAc...) asparagine). The chain crosses the membrane as a helical span at residues 226–246; sequence LMIFFMVMCIVYVLFGVLWLA. The Cytoplasmic segment spans residues 247-257; it reads WSACYWRDLLR. The chain crosses the membrane as a helical span at residues 258–278; it reads IQFWIGAVIFLGMLEKAVFYA. Over 279 to 305 the chain is Lumenal; it reads EFQNIRYKGESVQGALILAELLSAVKR. Residues 306–322 form a helical membrane-spanning segment; the sequence is SLARTLVIIVSLGYGIV. Over 323-325 the chain is Cytoplasmic; that stretch reads KPR. Residues 326–346 form a helical membrane-spanning segment; the sequence is LGVTLHKVVVAGALYLLFSGM. Topologically, residues 347–361 are lumenal; that stretch reads EGVLRVTGAQTDLAS. Residues 362 to 382 form a helical membrane-spanning segment; that stretch reads LAFIPLAFLDTALCWWIFISL. At 383-403 the chain is on the cytoplasmic side; that stretch reads TQTMKLLKLRRNIVKLSLYRH. The helical transmembrane segment at 404 to 424 threads the bilayer; it reads FTNTLILAVAASIVFIIWTTM. Topologically, residues 425–437 are lumenal; that stretch reads KFRIVTCQSDWRE. Residues 438–458 form a helical membrane-spanning segment; it reads LWVDDAIWRLLFSMILFVIMV. The Cytoplasmic portion of the chain corresponds to 459–555; it reads LWRPSANNQR…ITHFERSKME (97 aa). Positions 473–516 are disordered; that stretch reads PLSEEEEEDEQKEPMLKESFEGMKMRSTKQEPNGNSKVNKAQED. Over residues 484–496 the composition is skewed to basic and acidic residues; sequence KEPMLKESFEGMK. Positions 502 to 511 are enriched in polar residues; it reads QEPNGNSKVN. Serine 540 is subject to Phosphoserine.

The protein belongs to the LU7TM family. TMEM87 subfamily. May interact with STOML3; STOML3 potentiates the mechanosensitive ion channel activity associated with TMEM87A.

It localises to the cell membrane. It is found in the golgi apparatus membrane. The protein localises to the cell projection. Its subcellular location is the ruffle. Functionally, potential monoatomic ion channel gated by mechanical force, implicated in normal touch sensitivity through the generation of mechanically activated currents. However, a direct channel activity is debated and an alternative could be that it functions as a chaperone for an unidentified mechanosensitive ion channel. Could also be involved in cell mechanosensitivity regulating cell adhesion and migration. May also be involved in retrograde transport from endosomes to the trans-Golgi network (TGN). The sequence is that of Transmembrane protein 87A from Homo sapiens (Human).